The following is a 289-amino-acid chain: tRNA pseudouridine synthase A (289 aa).

Asp-53 acts as the Nucleophile in catalysis. Tyr-119 is a substrate binding site.

Belongs to the tRNA pseudouridine synthase TruA family. As to quaternary structure, homodimer.

The enzyme catalyses uridine(38/39/40) in tRNA = pseudouridine(38/39/40) in tRNA. Formation of pseudouridine at positions 38, 39 and 40 in the anticodon stem and loop of transfer RNAs. In Corynebacterium glutamicum (strain ATCC 13032 / DSM 20300 / JCM 1318 / BCRC 11384 / CCUG 27702 / LMG 3730 / NBRC 12168 / NCIMB 10025 / NRRL B-2784 / 534), this protein is tRNA pseudouridine synthase A.